We begin with the raw amino-acid sequence, 273 residues long: Dermonecrotic toxin SdSicTox-betaIIB1aiii (273 aa).

Residue His-4 is part of the active site. Mg(2+)-binding residues include Glu-24 and Asp-26. His-40 functions as the Nucleophile in the catalytic mechanism. Disulfide bonds link Cys-44–Cys-50 and Cys-46–Cys-189. Residue Asp-84 coordinates Mg(2+).

The protein belongs to the arthropod phospholipase D family. Class II subfamily. Mg(2+) is required as a cofactor. In terms of tissue distribution, expressed by the venom gland.

The protein localises to the secreted. The enzyme catalyses an N-(acyl)-sphingosylphosphocholine = an N-(acyl)-sphingosyl-1,3-cyclic phosphate + choline. The catalysed reaction is an N-(acyl)-sphingosylphosphoethanolamine = an N-(acyl)-sphingosyl-1,3-cyclic phosphate + ethanolamine. It catalyses the reaction a 1-acyl-sn-glycero-3-phosphocholine = a 1-acyl-sn-glycero-2,3-cyclic phosphate + choline. It carries out the reaction a 1-acyl-sn-glycero-3-phosphoethanolamine = a 1-acyl-sn-glycero-2,3-cyclic phosphate + ethanolamine. Dermonecrotic toxins cleave the phosphodiester linkage between the phosphate and headgroup of certain phospholipids (sphingolipid and lysolipid substrates), forming an alcohol (often choline) and a cyclic phosphate. This toxin acts on sphingomyelin (SM). It may also act on ceramide phosphoethanolamine (CPE), lysophosphatidylcholine (LPC) and lysophosphatidylethanolamine (LPE), but not on lysophosphatidylserine (LPS), and lysophosphatidylglycerol (LPG). It acts by transphosphatidylation, releasing exclusively cyclic phosphate products as second products. Induces dermonecrosis, hemolysis, increased vascular permeability, edema, inflammatory response, and platelet aggregation. The polypeptide is Dermonecrotic toxin SdSicTox-betaIIB1aiii (Sicarius cf. damarensis (strain GJB-2008) (Six-eyed sand spider)).